The sequence spans 804 residues: Ion-translocating oxidoreductase complex subunit C (804 aa).

4Fe-4S ferredoxin-type domains lie at 366-397 (SEMG…QQLY) and 407-436 (KARA…VQYY). [4Fe-4S] cluster-binding residues include Cys377, Cys380, Cys383, Cys387, Cys416, Cys419, Cys422, and Cys426. Disordered regions lie at residues 466–532 (RLER…EVRV) and 567–804 (KAAQ…MQED). 7 stretches are compositionally biased toward low complexity: residues 484-495 (SVASSDAGAIAA), 567-582 (KAAQ…APQQ), 592-619 (AAVA…EAPQ), 629-660 (KAAV…QQSA), 668-693 (AAVA…ATEA), 706-731 (AAVA…ATEA), and 744-769 (AAVA…ATEA).

It belongs to the 4Fe4S bacterial-type ferredoxin family. RnfC subfamily. The complex is composed of six subunits: RnfA, RnfB, RnfC, RnfD, RnfE and RnfG. It depends on [4Fe-4S] cluster as a cofactor.

The protein localises to the cell inner membrane. In terms of biological role, part of a membrane-bound complex that couples electron transfer with translocation of ions across the membrane. The protein is Ion-translocating oxidoreductase complex subunit C of Erwinia tasmaniensis (strain DSM 17950 / CFBP 7177 / CIP 109463 / NCPPB 4357 / Et1/99).